Here is a 204-residue protein sequence, read N- to C-terminus: Ribonuclease HII (204 aa).

The 188-residue stretch at 17-204 (QLVAGVDEVG…KPVQQLLQGD (188 aa)) folds into the RNase H type-2 domain. A divalent metal cation contacts are provided by Asp-23, Glu-24, and Asp-115.

It belongs to the RNase HII family. The cofactor is Mn(2+). It depends on Mg(2+) as a cofactor.

Its subcellular location is the cytoplasm. It carries out the reaction Endonucleolytic cleavage to 5'-phosphomonoester.. Endonuclease that specifically degrades the RNA of RNA-DNA hybrids. This chain is Ribonuclease HII, found in Hahella chejuensis (strain KCTC 2396).